A 598-amino-acid chain; its full sequence is Peroxisomal targeting signal receptor (598 aa).

Disordered regions lie at residues 1 to 54 (MSFM…GEMS), 135 to 154 (RGGS…MQGG), and 208 to 237 (AVGK…TTTE). The span at 9–22 (ECSTGRNPLSQFTK) shows a compositional bias: polar residues. Cys-10 is covalently cross-linked (Glycyl cysteine thioester (Cys-Gly) (interchain with G-Cter in ubiquitin)). A Glycyl lysine isopeptide (Lys-Gly) (interchain with G-Cter in ubiquitin) cross-link involves residue Lys-22. Residues 23–35 (HTAEDRSLQHDRV) show a composition bias toward basic and acidic residues. Residues 220 to 233 (AETATATETVTETE) are compositionally biased toward low complexity. TPR repeat units follow at residues 304–337 (PDPF…NTEH), 338–371 (AEAW…EPGN), 372–409 (LSAL…VVDQ), 410–447 (ARNQ…ANID), 448–481 (ADVQ…RPDD), 482–515 (ALLW…RPSF), and 516–549 (VRAR…HKVE).

It belongs to the peroxisomal targeting signal receptor family. Ubiquitination at Cys-10 is UBC4-independent but requires the presence of PEX4. Ubiquitination at Lys-22 is UBC4-dependent.

It localises to the cytoplasm. The protein localises to the peroxisome membrane. Binds to the C-terminal PTS1-type tripeptide peroxisomal targeting signal (SKL-type) and plays an essential role in peroxisomal protein import. The protein is Peroxisomal targeting signal receptor (PAY32) of Yarrowia lipolytica (strain CLIB 122 / E 150) (Yeast).